Here is a 266-residue protein sequence, read N- to C-terminus: Hydroxyethylthiazole kinase (266 aa).

Position 46 (methionine 46) interacts with substrate. Residues lysine 122 and threonine 166 each coordinate ATP. Glycine 193 is a binding site for substrate.

This sequence belongs to the Thz kinase family. It depends on Mg(2+) as a cofactor.

The catalysed reaction is 5-(2-hydroxyethyl)-4-methylthiazole + ATP = 4-methyl-5-(2-phosphooxyethyl)-thiazole + ADP + H(+). It participates in cofactor biosynthesis; thiamine diphosphate biosynthesis; 4-methyl-5-(2-phosphoethyl)-thiazole from 5-(2-hydroxyethyl)-4-methylthiazole: step 1/1. Functionally, catalyzes the phosphorylation of the hydroxyl group of 4-methyl-5-beta-hydroxyethylthiazole (THZ). In Caldivirga maquilingensis (strain ATCC 700844 / DSM 13496 / JCM 10307 / IC-167), this protein is Hydroxyethylthiazole kinase.